Consider the following 335-residue polypeptide: Nucleoid-associated protein PC1_1634 (335 aa).

It belongs to the YejK family.

The protein localises to the cytoplasm. It localises to the nucleoid. This is Nucleoid-associated protein PC1_1634 from Pectobacterium carotovorum subsp. carotovorum (strain PC1).